The sequence spans 212 residues: Golgi-associated RAB2 interactor protein 5A (212 aa).

2 disordered regions span residues 1–21 (MKGGRDLKAARGGADRPLAPA) and 162–212 (PFTH…LWGL). The span at 169-185 (APEEEEEEEEEEEEEEV) shows a compositional bias: acidic residues.

This sequence belongs to the GARIN family. As to quaternary structure, interacts (via N-terminus) with RAB2B (in GTP-bound form). As to expression, expressed in testis (at protein level).

The protein resides in the golgi apparatus. Functionally, RAB2B effector protein which promotes cytosolic DNA-induced innate immune responses. Regulates IFN responses against DNA viruses by regulating the CGAS-STING signaling axis. This Mus musculus (Mouse) protein is Golgi-associated RAB2 interactor protein 5A.